Here is a 173-residue protein sequence, read N- to C-terminus: Crossover junction endodeoxyribonuclease RuvC (173 aa).

Residues aspartate 8, glutamate 67, and aspartate 139 contribute to the active site. Residues aspartate 8, glutamate 67, and aspartate 139 each coordinate Mg(2+).

This sequence belongs to the RuvC family. In terms of assembly, homodimer which binds Holliday junction (HJ) DNA. The HJ becomes 2-fold symmetrical on binding to RuvC with unstacked arms; it has a different conformation from HJ DNA in complex with RuvA. In the full resolvosome a probable DNA-RuvA(4)-RuvB(12)-RuvC(2) complex forms which resolves the HJ. It depends on Mg(2+) as a cofactor.

The protein resides in the cytoplasm. It carries out the reaction Endonucleolytic cleavage at a junction such as a reciprocal single-stranded crossover between two homologous DNA duplexes (Holliday junction).. Its function is as follows. The RuvA-RuvB-RuvC complex processes Holliday junction (HJ) DNA during genetic recombination and DNA repair. Endonuclease that resolves HJ intermediates. Cleaves cruciform DNA by making single-stranded nicks across the HJ at symmetrical positions within the homologous arms, yielding a 5'-phosphate and a 3'-hydroxyl group; requires a central core of homology in the junction. The consensus cleavage sequence is 5'-(A/T)TT(C/G)-3'. Cleavage occurs on the 3'-side of the TT dinucleotide at the point of strand exchange. HJ branch migration catalyzed by RuvA-RuvB allows RuvC to scan DNA until it finds its consensus sequence, where it cleaves and resolves the cruciform DNA. The protein is Crossover junction endodeoxyribonuclease RuvC of Vibrio parahaemolyticus serotype O3:K6 (strain RIMD 2210633).